The sequence spans 351 residues: Uroporphyrinogen decarboxylase (351 aa).

Substrate-binding positions include 32–36 (RQAGR), Phe51, Asp82, Tyr157, Ser211, and His326.

The protein belongs to the uroporphyrinogen decarboxylase family. As to quaternary structure, homodimer.

The protein localises to the cytoplasm. The catalysed reaction is uroporphyrinogen III + 4 H(+) = coproporphyrinogen III + 4 CO2. It functions in the pathway porphyrin-containing compound metabolism; protoporphyrin-IX biosynthesis; coproporphyrinogen-III from 5-aminolevulinate: step 4/4. Its function is as follows. Catalyzes the decarboxylation of four acetate groups of uroporphyrinogen III to yield coproporphyrinogen III. This is Uroporphyrinogen decarboxylase from Caulobacter vibrioides (strain ATCC 19089 / CIP 103742 / CB 15) (Caulobacter crescentus).